A 501-amino-acid chain; its full sequence is uncharacterized protein (501 aa).

A helical transmembrane segment spans residues 26 to 46 (ILLLLLGLIVLVNIGINVATM). 2 disordered regions span residues 316–384 (RGTE…VRRR) and 409–501 (EASH…EKLN). Residues 476-490 (RSSSLPPASTSTLRP) show a composition bias toward low complexity.

Its subcellular location is the membrane. This is an uncharacterized protein from Homo sapiens (Human).